The following is an 86-amino-acid chain: CLAVATA3/ESR (CLE)-related protein 8 (86 aa).

Residues 1 to 24 (MKVLKRDSMLLLITLYFLLTTSMA) form the signal peptide. The disordered stretch occupies residues 43–86 (DLKQNKAKPHLPNLFRTMRRVPTGPNPLHHISPPQPGSLNYARN). Pro64 and Pro67 each carry hydroxyproline. Pro67 is a glycosylation site (O-linked (Ara...) hydroxyproline).

Belongs to the CLV3/ESR signal peptide family. In terms of processing, the O-glycosylation (arabinosylation) of the hydroxyproline Pro-67 enhances binding affinity of the CLE8p peptide for its receptor. As to expression, mostly expressed in siliques, and, to a lower extent, in flowers. Expressed in young embryos and endosperm.

It localises to the secreted. The protein localises to the extracellular space. Extracellular signal peptide that regulates cell fate. Represses root apical meristem maintenance. Positively regulates the expression of the transcription factor WOX8 and thus, regulates early embryo development. Regulates the transition of protophloem cells from proliferation to differentiation, thus impinging on postembryonic growth capacity of the root meristem; this signaling pathway requires CRN and CLV2. This chain is CLAVATA3/ESR (CLE)-related protein 8, found in Arabidopsis thaliana (Mouse-ear cress).